The chain runs to 226 residues: Phosphatidylserine decarboxylase proenzyme (226 aa).

Catalysis depends on S184, which acts as the Schiff-base intermediate with substrate; via pyruvic acid. Position 184 is a pyruvic acid (Ser); by autocatalysis (S184).

It belongs to the phosphatidylserine decarboxylase family. PSD-A subfamily. As to quaternary structure, heterodimer of a large membrane-associated beta subunit and a small pyruvoyl-containing alpha subunit. It depends on pyruvate as a cofactor. In terms of processing, is synthesized initially as an inactive proenzyme. Formation of the active enzyme involves a self-maturation process in which the active site pyruvoyl group is generated from an internal serine residue via an autocatalytic post-translational modification. Two non-identical subunits are generated from the proenzyme in this reaction, and the pyruvate is formed at the N-terminus of the alpha chain, which is derived from the carboxyl end of the proenzyme. The post-translation cleavage follows an unusual pathway, termed non-hydrolytic serinolysis, in which the side chain hydroxyl group of the serine supplies its oxygen atom to form the C-terminus of the beta chain, while the remainder of the serine residue undergoes an oxidative deamination to produce ammonia and the pyruvoyl prosthetic group on the alpha chain.

It is found in the cell membrane. The enzyme catalyses a 1,2-diacyl-sn-glycero-3-phospho-L-serine + H(+) = a 1,2-diacyl-sn-glycero-3-phosphoethanolamine + CO2. Its pathway is phospholipid metabolism; phosphatidylethanolamine biosynthesis; phosphatidylethanolamine from CDP-diacylglycerol: step 2/2. Functionally, catalyzes the formation of phosphatidylethanolamine (PtdEtn) from phosphatidylserine (PtdSer). The sequence is that of Phosphatidylserine decarboxylase proenzyme from Ehrlichia chaffeensis (strain ATCC CRL-10679 / Arkansas).